The chain runs to 466 residues: Anthocyanidin 3-O-glucosyltransferase 1 (466 aa).

His22 serves as the catalytic Proton acceptor. Positions 22 and 87 each coordinate an anthocyanidin. Asp122 acts as the Charge relay in catalysis. Thr145 serves as a coordination point for UDP-alpha-D-glucose. His154 lines the an anthocyanidin pocket. 7 residues coordinate UDP-alpha-D-glucose: Ala346, Gln348, His363, Trp366, Asn367, Ser368, and Glu371. Gly386 provides a ligand contact to an anthocyanidin. Residues Asp387 and Gln388 each contribute to the UDP-alpha-D-glucose site.

It belongs to the UDP-glycosyltransferase family. Highest expression detected in receptacles and achenes, with very low levels detected in runners, leaves, flowers, crowns and green receptacles.

The catalysed reaction is an anthocyanidin + UDP-alpha-D-glucose + H(+) = an anthocyanidin 3-O-beta-D-glucoside + UDP. It carries out the reaction cyanidin + UDP-alpha-D-glucose = cyanidin 3-O-beta-D-glucoside + UDP + H(+). It catalyses the reaction pelargonidin + UDP-alpha-D-glucose = pelargonidin 3-O-beta-D-glucoside + UDP. The enzyme catalyses peonidin + UDP-alpha-D-glucose = peonidin 3-O-beta-D-glucoside + UDP. The catalysed reaction is delphinidin + UDP-alpha-D-glucose = delphinidin 3-O-beta-D-glucoside + UDP. It carries out the reaction a flavonol + UDP-alpha-D-glucose = a flavonol 3-O-beta-D-glucoside + UDP + H(+). It participates in pigment biosynthesis; anthocyanin biosynthesis. In terms of biological role, in the presence of other necessary color factors, this glycosylation reaction allows the accumulation of anthocyanin pigments. Uses UDP-Glc as a sugar donor, but not UDP-Gal or UDP-GlcUA. Anthocyanidins are the preferred substrates in vivo, but flavonols can also be glucosylated in vitro. The polypeptide is Anthocyanidin 3-O-glucosyltransferase 1 (Fragaria ananassa (Strawberry)).